The following is a 118-amino-acid chain: UPF0102 protein Cphy_2398 (118 aa).

It belongs to the UPF0102 family.

This chain is UPF0102 protein Cphy_2398, found in Lachnoclostridium phytofermentans (strain ATCC 700394 / DSM 18823 / ISDg) (Clostridium phytofermentans).